The following is a 159-amino-acid chain: MTSRLARLWQPGNPQRRVFLPDFWMAVVESPSVGRNRLPRNCVKFEVDPRMSRHDIREYLTKIYDLPVRDVRTEVQMGDITWNSKLDHQYKKAMWKDEDKKIAYVFMSKGFEFSYPQMFEALEEDLELVKAMKQQEELKDKLNERYANRNRRVGQFLGA.

The protein belongs to the universal ribosomal protein uL23 family. Component of the mitochondrial ribosome large subunit (39S) which comprises a 16S rRNA and about 50 distinct proteins.

Its subcellular location is the mitochondrion. This is Large ribosomal subunit protein uL23m (mrpl-23) from Caenorhabditis elegans.